Consider the following 314-residue polypeptide: Nodulation protein D 1 (314 aa).

The HTH lysR-type domain maps to 6-63; it reads LDLNLLVALDALMTERNLTAAARQINLSQPAMSAAIARLRSYFRDELFTMRGRELVPT. Residues 23-42 constitute a DNA-binding region (H-T-H motif); sequence LTAAARQINLSQPAMSAAIA.

It belongs to the LysR transcriptional regulatory family.

Functionally, nodD regulates the expression of the nodABCFE genes which encode other nodulation proteins. NodD is also a negative regulator of its own expression. Binds flavonoids as inducers. The polypeptide is Nodulation protein D 1 (nodD1) (Bradyrhizobium elkanii).